The sequence spans 479 residues: Sulfate adenylyltransferase subunit 1 (479 aa).

The tr-type G domain maps to 25–239 (KSLLRFLTCG…EVLETVDIQR (215 aa)). The tract at residues 34-41 (GSVDDGKS) is G1. 34-41 (GSVDDGKS) serves as a coordination point for GTP. Residues 92 to 96 (GITID) are G2. The interval 113–116 (DTPG) is G3. Residues 113–117 (DTPGH) and 168–171 (NKMD) each bind GTP. The tract at residues 168–171 (NKMD) is G4. The interval 206-208 (SAL) is G5.

It belongs to the TRAFAC class translation factor GTPase superfamily. Classic translation factor GTPase family. CysN/NodQ subfamily. As to quaternary structure, heterodimer composed of CysD, the smaller subunit, and CysN.

It catalyses the reaction sulfate + ATP + H(+) = adenosine 5'-phosphosulfate + diphosphate. It participates in sulfur metabolism; hydrogen sulfide biosynthesis; sulfite from sulfate: step 1/3. Its function is as follows. With CysD forms the ATP sulfurylase (ATPS) that catalyzes the adenylation of sulfate producing adenosine 5'-phosphosulfate (APS) and diphosphate, the first enzymatic step in sulfur assimilation pathway. APS synthesis involves the formation of a high-energy phosphoric-sulfuric acid anhydride bond driven by GTP hydrolysis by CysN coupled to ATP hydrolysis by CysD. This is Sulfate adenylyltransferase subunit 1 from Salmonella typhimurium (strain LT2 / SGSC1412 / ATCC 700720).